The sequence spans 295 residues: Ethanolamine ammonia-lyase small subunit (295 aa).

Adenosylcob(III)alamin-binding residues include V207, E228, and C258.

This sequence belongs to the EutC family. In terms of assembly, the basic unit is a heterodimer which dimerizes to form tetramers. The heterotetramers trimerize; 6 large subunits form a core ring with 6 small subunits projecting outwards. The cofactor is adenosylcob(III)alamin.

The protein resides in the bacterial microcompartment. It carries out the reaction ethanolamine = acetaldehyde + NH4(+). Its pathway is amine and polyamine degradation; ethanolamine degradation. In terms of biological role, catalyzes the deamination of various vicinal amino-alcohols to oxo compounds. Allows this organism to utilize ethanolamine as the sole source of nitrogen and carbon in the presence of external vitamin B12. The polypeptide is Ethanolamine ammonia-lyase small subunit (Escherichia coli O157:H7).